The sequence spans 606 residues: Arginine--tRNA ligase (606 aa).

Residues 126–136 (PNTNKPLHLGH) carry the 'HIGH' region motif.

Belongs to the class-I aminoacyl-tRNA synthetase family. In terms of assembly, monomer.

The protein localises to the cytoplasm. It catalyses the reaction tRNA(Arg) + L-arginine + ATP = L-arginyl-tRNA(Arg) + AMP + diphosphate. The polypeptide is Arginine--tRNA ligase (Phocaeicola vulgatus (strain ATCC 8482 / DSM 1447 / JCM 5826 / CCUG 4940 / NBRC 14291 / NCTC 11154) (Bacteroides vulgatus)).